A 162-amino-acid chain; its full sequence is Putative ripening-related protein 7 (162 aa).

A signal peptide spans 1–30 (MAAAAASTKIVAVVVAVLLAILEMPSCAVA).

Belongs to the kiwellin family.

It is found in the secreted. This chain is Putative ripening-related protein 7, found in Oryza sativa subsp. japonica (Rice).